The sequence spans 94 residues: Aspartyl/glutamyl-tRNA(Asn/Gln) amidotransferase subunit C (94 aa).

Belongs to the GatC family. Heterotrimer of A, B and C subunits.

The catalysed reaction is L-glutamyl-tRNA(Gln) + L-glutamine + ATP + H2O = L-glutaminyl-tRNA(Gln) + L-glutamate + ADP + phosphate + H(+). The enzyme catalyses L-aspartyl-tRNA(Asn) + L-glutamine + ATP + H2O = L-asparaginyl-tRNA(Asn) + L-glutamate + ADP + phosphate + 2 H(+). Its function is as follows. Allows the formation of correctly charged Asn-tRNA(Asn) or Gln-tRNA(Gln) through the transamidation of misacylated Asp-tRNA(Asn) or Glu-tRNA(Gln) in organisms which lack either or both of asparaginyl-tRNA or glutaminyl-tRNA synthetases. The reaction takes place in the presence of glutamine and ATP through an activated phospho-Asp-tRNA(Asn) or phospho-Glu-tRNA(Gln). This Syntrophomonas wolfei subsp. wolfei (strain DSM 2245B / Goettingen) protein is Aspartyl/glutamyl-tRNA(Asn/Gln) amidotransferase subunit C.